A 510-amino-acid chain; its full sequence is NAD(P)H-quinone oxidoreductase subunit 2 A, chloroplastic (510 aa).

14 helical membrane passes run 31 to 51, 59 to 79, 99 to 119, 124 to 144, 149 to 169, 184 to 204, 229 to 249, 261 to 281, 295 to 315, 323 to 343, 354 to 374, 395 to 415, 418 to 438, and 484 to 504; these read FIFP…IDLT, WFYF…LFRW, IFQF…VEYI, MAIT…MFLC, LITI…LSGY, LLMG…LYGL, ISIA…LAPF, PTPV…ALAT, WHLL…LLAI, MLAY…IVGD, YMLF…LFGL, ALSL…AGFF, LYLF…IGLL, and MTVC…ILAI.

This sequence belongs to the complex I subunit 2 family. As to quaternary structure, NDH is composed of at least 16 different subunits, 5 of which are encoded in the nucleus.

The protein resides in the plastid. It is found in the chloroplast thylakoid membrane. It catalyses the reaction a plastoquinone + NADH + (n+1) H(+)(in) = a plastoquinol + NAD(+) + n H(+)(out). The catalysed reaction is a plastoquinone + NADPH + (n+1) H(+)(in) = a plastoquinol + NADP(+) + n H(+)(out). In terms of biological role, NDH shuttles electrons from NAD(P)H:plastoquinone, via FMN and iron-sulfur (Fe-S) centers, to quinones in the photosynthetic chain and possibly in a chloroplast respiratory chain. The immediate electron acceptor for the enzyme in this species is believed to be plastoquinone. Couples the redox reaction to proton translocation, and thus conserves the redox energy in a proton gradient. This is NAD(P)H-quinone oxidoreductase subunit 2 A, chloroplastic from Oryza sativa subsp. japonica (Rice).